Here is a 419-residue protein sequence, read N- to C-terminus: UDP-N-acetylglucosamine 1-carboxyvinyltransferase 2 (419 aa).

22 to 23 (KN) serves as a coordination point for phosphoenolpyruvate. R92 is a binding site for UDP-N-acetyl-alpha-D-glucosamine. The active-site Proton donor is the C116. C116 is modified (2-(S-cysteinyl)pyruvic acid O-phosphothioketal). UDP-N-acetyl-alpha-D-glucosamine contacts are provided by residues 121–125 (RPIDL), D306, and I328.

This sequence belongs to the EPSP synthase family. MurA subfamily.

The protein resides in the cytoplasm. The enzyme catalyses phosphoenolpyruvate + UDP-N-acetyl-alpha-D-glucosamine = UDP-N-acetyl-3-O-(1-carboxyvinyl)-alpha-D-glucosamine + phosphate. The protein operates within cell wall biogenesis; peptidoglycan biosynthesis. In terms of biological role, cell wall formation. Adds enolpyruvyl to UDP-N-acetylglucosamine. In Streptococcus pneumoniae (strain ATCC BAA-255 / R6), this protein is UDP-N-acetylglucosamine 1-carboxyvinyltransferase 2.